The chain runs to 155 residues: 6,7-dimethyl-8-ribityllumazine synthase (155 aa).

Residues Phe22, 57-59 (AVE), and 81-83 (TVI) contribute to the 5-amino-6-(D-ribitylamino)uracil site. Residue 86 to 87 (GT) coordinates (2S)-2-hydroxy-3-oxobutyl phosphate. Catalysis depends on His89, which acts as the Proton donor. Phe114 contributes to the 5-amino-6-(D-ribitylamino)uracil binding site. Arg128 lines the (2S)-2-hydroxy-3-oxobutyl phosphate pocket.

The protein belongs to the DMRL synthase family. Forms an icosahedral capsid composed of 60 subunits, arranged as a dodecamer of pentamers.

It carries out the reaction (2S)-2-hydroxy-3-oxobutyl phosphate + 5-amino-6-(D-ribitylamino)uracil = 6,7-dimethyl-8-(1-D-ribityl)lumazine + phosphate + 2 H2O + H(+). It functions in the pathway cofactor biosynthesis; riboflavin biosynthesis; riboflavin from 2-hydroxy-3-oxobutyl phosphate and 5-amino-6-(D-ribitylamino)uracil: step 1/2. In terms of biological role, catalyzes the formation of 6,7-dimethyl-8-ribityllumazine by condensation of 5-amino-6-(D-ribitylamino)uracil with 3,4-dihydroxy-2-butanone 4-phosphate. This is the penultimate step in the biosynthesis of riboflavin. This chain is 6,7-dimethyl-8-ribityllumazine synthase, found in Psychromonas ingrahamii (strain DSM 17664 / CCUG 51855 / 37).